A 369-amino-acid polypeptide reads, in one-letter code: Core histone macro-H2A.1 (369 aa).

N6-lactoyllysine; alternate is present on residues Lys-7 and Lys-9. The Histone H2A domain maps to 15–90; it reads RSAKAGVIFP…ILLAVANDEE (76 aa). Lys-18 bears the N6-methyllysine mark. Residue Lys-116 is modified to N6-acetyllysine; alternate. A Glycyl lysine isopeptide (Lys-Gly) (interchain with G-Cter in ubiquitin); alternate cross-link involves residue Lys-116. A Glycyl lysine isopeptide (Lys-Gly) (interchain with G-Cter in ubiquitin) cross-link involves residue Lys-117. Position 123 is an N6-acetyllysine; alternate (Lys-123). Lys-123 is subject to N6,N6-dimethyllysine; alternate. Lys-123 participates in a covalent cross-link: Glycyl lysine isopeptide (Lys-Gly) (interchain with G-Cter in SUMO2); alternate. The disordered stretch occupies residues 128–180; it reads ITPPPAKKAKSPSQKKTVSKKTGGKKGARKSKKKQGEVSKSASADSTTEGTPA. Thr-129 is subject to Phosphothreonine. A compositionally biased stretch (basic residues) spans 144 to 160; the sequence is TVSKKTGGKKGARKSKK. The segment covering 165–177 has biased composition (polar residues); that stretch reads VSKSASADSTTEG. Lys-167 is covalently cross-linked (Glycyl lysine isopeptide (Lys-Gly) (interchain with G-Cter in SUMO2)). Residues Ser-170 and Ser-173 each carry the phosphoserine modification. A Phosphothreonine modification is found at Thr-178. The Macro domain maps to 184–367; the sequence is TVLSTKSLFL…IYVQEMAKLD (184 aa). Lys-189 participates in a covalent cross-link: Glycyl lysine isopeptide (Lys-Gly) (interchain with G-Cter in SUMO2). 8 residues coordinate a glycoprotein: Asp-203, Ile-204, Val-226, Ser-275, Gly-312, Ser-313, Gly-314, and Asn-316. Lys-320 participates in a covalent cross-link: Glycyl lysine isopeptide (Lys-Gly) (interchain with G-Cter in SUMO2).

Belongs to the histone H2A family. In terms of assembly, the nucleosome is a histone octamer containing two molecules each of H2A, H2B, H3 and H4 assembled in one H3-H4 heterotetramer and two H2A-H2B heterodimers. Post-translationally, ADP-ribosylated. In terms of processing, monoubiquitinated at either Lys-116 or Lys-117. May also be polyubiquitinated. Ubiquitination is mediated by the CUL3/SPOP E3 complex and does not promote proteasomal degradation. Instead, it is required for enrichment in inactive X chromosome chromatin. Present in liver (at protein level).

The protein resides in the nucleus. It localises to the chromosome. Variant histone H2A which replaces conventional H2A in a subset of nucleosomes where it represses transcription. Nucleosomes wrap and compact DNA into chromatin, limiting DNA accessibility to the cellular machineries which require DNA as a template. Histones thereby play a central role in transcription regulation, DNA repair, DNA replication and chromosomal stability. DNA accessibility is regulated via a complex set of post-translational modifications of histones, also called histone code, and nucleosome remodeling. Its function is as follows. Isoform that specifically binds poly-ADP-ribose and O-acetyl-ADP-ribose and plays a key role in NAD(+) metabolism. Able to bind to the ends of poly-ADP-ribose chains created by PARP1 and cap them. This prevents PARP1 from further addition of ADP-ribose and thus limits the consumption of nuclear NAD(+), allowing the cell to maintain proper NAD(+) levels in both the nucleus and the mitochondria to promote proper mitochondrial respiration. In terms of biological role, in contrast to isoform 1, does not bind poly-ADP-ribose. This Gallus gallus (Chicken) protein is Core histone macro-H2A.1.